A 207-amino-acid polypeptide reads, in one-letter code: Ribonuclease HII (207 aa).

The 190-residue stretch at 12–201 (DLVAGVDEVG…VRAAWEAREG (190 aa)) folds into the RNase H type-2 domain. A divalent metal cation-binding residues include Asp-18, Glu-19, and Asp-110.

Belongs to the RNase HII family. Mn(2+) is required as a cofactor. The cofactor is Mg(2+).

The protein resides in the cytoplasm. It carries out the reaction Endonucleolytic cleavage to 5'-phosphomonoester.. Endonuclease that specifically degrades the RNA of RNA-DNA hybrids. The chain is Ribonuclease HII from Pseudomonas putida (strain W619).